Here is a 209-residue protein sequence, read N- to C-terminus: MTQKEQGQGFIEVVCGPMFAGKTEALIQRSNQALQLNKKILSFKPQIDDRYSVKEEIVSHNQNTIPAILIDKSKDILPFITPEINVVIIDEAQFLDNDIVAIVDYLANCNIEVIISGLELDFCGKPFGPMPYLLAIADTVTKLTSICAISGKKANRTQRLIDGKPAQSNEPVVLVGGKEYHEPRCRKHHCLADIDKTKINWQNFTNQSK.

ATP is bound by residues 16 to 23 (GPMFAGKT) and 90 to 93 (DEAQ). Catalysis depends on Glu91, which acts as the Proton acceptor.

Belongs to the thymidine kinase family. In terms of assembly, homotetramer.

It is found in the cytoplasm. It carries out the reaction thymidine + ATP = dTMP + ADP + H(+). The sequence is that of Thymidine kinase from Onion yellows phytoplasma (strain OY-M).